Here is a 993-residue protein sequence, read N- to C-terminus: Testis-expressed protein 13C (993 aa).

Disordered regions lie at residues 281–381 (QEET…SLKK), 520–547 (DSKS…SHSL), and 894–959 (FSKS…PVNW). A compositionally biased stretch (polar residues) spans 325–335 (GMTSQGDSSSH). A compositionally biased stretch (basic and acidic residues) spans 353–364 (SRSHSLEKKPVM). The span at 944–957 (ESQQQKPASCSSPV) shows a compositional bias: polar residues. The segment at 955-984 (SPVNWACPWCNAMNFPRNKVCSKCKRVRMP) adopts a RanBP2-type zinc-finger fold.

It belongs to the TEX13 family.

The protein is Testis-expressed protein 13C of Homo sapiens (Human).